A 51-amino-acid chain; its full sequence is Lantibiotic streptococcin A-FF22 (51 aa).

The propeptide occupies 1–25; that stretch reads MEKNNEVINSIQEVSLEELDQIIGA. 2 consecutive cross-links (beta-methyllanthionine (Thr-Cys)) follow at residues 33–38 and 42–50; these read TISHEC and TWAFLATCC. Residues 35–49 constitute a cross-link (lanthionine (Ser-Cys)); it reads SHECHLNTWAFLATC. Residue Thr-48 is modified to 2,3-didehydrobutyrine.

This sequence belongs to the type A lantibiotic family. In terms of processing, maturation of lantibiotics involves the enzymatic conversion of Thr, and Ser into dehydrated AA and the formation of thioether bonds with cysteine. This is followed by membrane translocation and cleavage of the modified precursor.

It localises to the secreted. The protein localises to the cell surface. Lanthionine-containing peptide antibiotic (lantibiotic) active on certain Gram-positive bacteria. The bactericidal activity of lantibiotics is based on depolarization of energized bacterial cytoplasmic membranes, initiated by the formation of aqueous transmembrane pores. This is Lantibiotic streptococcin A-FF22 (scnA) from Streptococcus pyogenes.